The sequence spans 284 residues: Bifunctional protein FolD (284 aa).

NADP(+) is bound by residues 166 to 168 and isoleucine 232; that span reads GAS.

It belongs to the tetrahydrofolate dehydrogenase/cyclohydrolase family. Homodimer.

It carries out the reaction (6R)-5,10-methylene-5,6,7,8-tetrahydrofolate + NADP(+) = (6R)-5,10-methenyltetrahydrofolate + NADPH. It catalyses the reaction (6R)-5,10-methenyltetrahydrofolate + H2O = (6R)-10-formyltetrahydrofolate + H(+). Its pathway is one-carbon metabolism; tetrahydrofolate interconversion. Its function is as follows. Catalyzes the oxidation of 5,10-methylenetetrahydrofolate to 5,10-methenyltetrahydrofolate and then the hydrolysis of 5,10-methenyltetrahydrofolate to 10-formyltetrahydrofolate. This Pseudoalteromonas translucida (strain TAC 125) protein is Bifunctional protein FolD.